Consider the following 492-residue polypeptide: N-succinylglutamate 5-semialdehyde dehydrogenase (492 aa).

220-225 is an NAD(+) binding site; sequence GSANTG. Residues Glu243 and Cys277 contribute to the active site.

It belongs to the aldehyde dehydrogenase family. AstD subfamily.

The enzyme catalyses N-succinyl-L-glutamate 5-semialdehyde + NAD(+) + H2O = N-succinyl-L-glutamate + NADH + 2 H(+). It functions in the pathway amino-acid degradation; L-arginine degradation via AST pathway; L-glutamate and succinate from L-arginine: step 4/5. Functionally, catalyzes the NAD-dependent reduction of succinylglutamate semialdehyde into succinylglutamate. The chain is N-succinylglutamate 5-semialdehyde dehydrogenase from Escherichia fergusonii (strain ATCC 35469 / DSM 13698 / CCUG 18766 / IAM 14443 / JCM 21226 / LMG 7866 / NBRC 102419 / NCTC 12128 / CDC 0568-73).